A 323-amino-acid chain; its full sequence is Fructose-1,6-bisphosphatase class 1 (323 aa).

The Mg(2+) site is built by E84, D103, L105, and D106. Substrate contacts are provided by residues 106-109 (DGSS), N198, and K264. E270 provides a ligand contact to Mg(2+).

This sequence belongs to the FBPase class 1 family. In terms of assembly, homotetramer. Mg(2+) serves as cofactor.

It is found in the cytoplasm. The enzyme catalyses beta-D-fructose 1,6-bisphosphate + H2O = beta-D-fructose 6-phosphate + phosphate. It participates in carbohydrate biosynthesis; gluconeogenesis. The chain is Fructose-1,6-bisphosphatase class 1 from Hydrogenovibrio crunogenus (strain DSM 25203 / XCL-2) (Thiomicrospira crunogena).